We begin with the raw amino-acid sequence, 307 residues long: Nuclear polyadenylated RNA-binding protein nab2 (307 aa).

The segment at 102-135 is disordered; sequence STDKSQQSFSVPETSIQPQSSQTPNITSLREEKE. Polar residues predominate over residues 105–129; that stretch reads KSQQSFSVPETSIQPQSSQTPNITS. 3 C3H1-type zinc fingers span residues 178–202, 217–232, and 254–268; these read TQEV…HPTP, CASG…VKGH, and CKYK…RFIH. The segment at 274–307 is disordered; it reads NMTWRPPSKTEETSLSERSFAVNESEEQLHVPSV.

It belongs to the ZC3H14 family.

Its subcellular location is the nucleus. Its function is as follows. RNA-binding protein involved in RNA processing. Acts as a regulator of mRNA stability: binds to mRNAs and pre-mRNAs, preventing their degradation. Involved in the biogenesis of circular RNAs (circRNAs) which are produced by back-splicing circularization of pre-mRNAs. This Schizosaccharomyces pombe (strain 972 / ATCC 24843) (Fission yeast) protein is Nuclear polyadenylated RNA-binding protein nab2.